A 229-amino-acid chain; its full sequence is Cytidylate kinase (229 aa).

ATP is bound at residue 12-20; that stretch reads GPSGAGKGT.

It belongs to the cytidylate kinase family. Type 1 subfamily.

It is found in the cytoplasm. It carries out the reaction CMP + ATP = CDP + ADP. It catalyses the reaction dCMP + ATP = dCDP + ADP. This chain is Cytidylate kinase, found in Serratia proteamaculans (strain 568).